The primary structure comprises 224 residues: GrpE protein homolog 2, mitochondrial (224 aa).

The transit peptide at 1–31 (MAARSLWAVQRLQRLLASGAMSESRGWLHPF) directs the protein to the mitochondrion. An N6-acetyllysine modification is found at K141.

Belongs to the GrpE family. Probable component of the PAM complex at least composed of a mitochondrial HSP70 protein, GRPEL1 or GRPEL2, TIMM44, TIMM16/PAM16 and TIMM14/DNAJC19. As to expression, ubiquitous.

Its subcellular location is the mitochondrion matrix. Its function is as follows. Essential component of the PAM complex, a complex required for the translocation of transit peptide-containing proteins from the inner membrane into the mitochondrial matrix in an ATP-dependent manner. Seems to control the nucleotide-dependent binding of mitochondrial HSP70 to substrate proteins. Stimulates ATPase activity of mt-HSP70. May also serve to modulate the interconversion of oligomeric (inactive) and monomeric (active) forms of mt-HSP70. The chain is GrpE protein homolog 2, mitochondrial (Grpel2) from Mus musculus (Mouse).